Consider the following 437-residue polypeptide: Aminopeptidase G (437 aa).

Catalysis depends on residues Cys-70, His-361, and Asn-382.

Belongs to the peptidase C1 family.

It localises to the cytoplasm. This chain is Aminopeptidase G (pepG), found in Lactobacillus delbrueckii subsp. lactis.